A 349-amino-acid polypeptide reads, in one-letter code: Twinfilin-2-B (349 aa).

ADF-H domains follow at residues 4 to 139 and 177 to 313; these read QTGI…KHVS and GLSF…DEVH. The interval 321–349 is disordered; it reads QAFAKPKGPAGKRGQKRLIKGPGENGEDS.

This sequence belongs to the actin-binding proteins ADF family. Twinfilin subfamily. In terms of assembly, interacts with G-actin; ADP-actin form and capping protein (CP).

Its subcellular location is the cytoplasm. The protein resides in the cytoskeleton. It localises to the perinuclear region. Actin-binding protein involved in motile and morphological processes. Inhibits actin polymerization, likely by sequestering G-actin. The sequence is that of Twinfilin-2-B (twf2-b) from Xenopus laevis (African clawed frog).